The primary structure comprises 990 residues: F-box/LRR-repeat protein 15 (990 aa).

The F-box domain maps to 190 to 236 (FEVHIDLTDDLLHMVFSFLNHVDLCRSAMVCRQWRVASAHEDFWRVL). 22 LRR repeats span residues 237–258 (NFEN…YPNA), 280–303 (LRNL…ALGE), 317–341 (LGNG…KCRV), 348–373 (CPQL…LLQL), 397–423 (LESL…CANL), 441–465 (LPML…WIAN), 466–477 (SPALEVLELDNC), 478–503 (NLLT…KFTD), 519–542 (CPAL…KQEN), 550–574 (CHSL…IFSD), 589–612 (CESL…GCRA), 614–633 (TSLE…GCDH), 640–652 (QPVA…LGIC), 653–678 (PKLS…VLSE), 734–756 (LPNL…VFKS), 758–782 (IQLK…LYKE), 785–809 (LPAL…LLAC), 813–839 (LTHL…LFDY), 882–893 (FYHLSTLNLSLS), 894–914 (VNLK…LSNC), 915–937 (CSLE…SCNM), and 949–973 (CSSL…KFRT).

The chain is F-box/LRR-repeat protein 15 (FBL15) from Arabidopsis thaliana (Mouse-ear cress).